The primary structure comprises 197 residues: Ubiquitin-conjugating enzyme E2 T (197 aa).

The UBC core domain maps to 2–152 (QRASRLKREL…ARQWTEKHAR (151 aa)). Residue Cys-86 is the Glycyl thioester intermediate of the active site. Residues Lys-91 and Lys-182 each participate in a glycyl lysine isopeptide (Lys-Gly) (interchain with G-Cter in ubiquitin) cross-link. The tract at residues 149–197 (KHARQKQKADEEEMLDNLPEAGDSRVHNSTQKRKASQLVGIEKKFHPDV) is disordered. The residue at position 184 (Ser-184) is a Phosphoserine. Glycyl lysine isopeptide (Lys-Gly) (interchain with G-Cter in SUMO2) cross-links involve residues Lys-191 and Lys-192.

It belongs to the ubiquitin-conjugating enzyme family. In terms of assembly, directly interacts with FANCL. Interacts with BRCA1. In terms of processing, auto-ubiquitinated. Effects of auto-monoubiquitination at Lys-91 and Lys-182 are unclear: according to a report, monoubiquitination inactivates E2 enzyme activity. In contrast, according to another report, autoubiquitination does not affect E2 enzyme activity.

Its subcellular location is the nucleus. It catalyses the reaction S-ubiquitinyl-[E1 ubiquitin-activating enzyme]-L-cysteine + [E2 ubiquitin-conjugating enzyme]-L-cysteine = [E1 ubiquitin-activating enzyme]-L-cysteine + S-ubiquitinyl-[E2 ubiquitin-conjugating enzyme]-L-cysteine.. It functions in the pathway protein modification; protein ubiquitination. Accepts ubiquitin from the E1 complex and catalyzes its covalent attachment to other proteins. Catalyzes monoubiquitination. Involved in mitomycin-C (MMC)-induced DNA repair. Acts as a specific E2 ubiquitin-conjugating enzyme for the Fanconi anemia complex by associating with E3 ubiquitin-protein ligase FANCL and catalyzing monoubiquitination of FANCD2, a key step in the DNA damage pathway. Also mediates monoubiquitination of FANCL and FANCI. May contribute to ubiquitination and degradation of BRCA1. In vitro able to promote polyubiquitination using all 7 ubiquitin Lys residues, but may prefer 'Lys-11'-, 'Lys-27'-, 'Lys-48'- and 'Lys-63'-linked polyubiquitination. The sequence is that of Ubiquitin-conjugating enzyme E2 T (UBE2T) from Homo sapiens (Human).